A 1330-amino-acid polypeptide reads, in one-letter code: G2/mitotic-specific cyclin-B3 (1330 aa).

The interval 1 to 50 (MPLPLPSRSSKPETKKSRSSKIVPSGNNGQSEKRGENYQEKISSSSPRRL) is disordered. Residues 20-30 (SKIVPSGNNGQ) are compositionally biased toward polar residues. Residues 54-62 (RSAFEDLTN) carry the D-box motif. The disordered stretch occupies residues 1002–1059 (VETSSRVPSTPPESRAGMSSVGKLSTTSKSSVCESSSNKPSSSWGESSQKEMTPLEDI). Positions 1026–1048 (STTSKSSVCESSSNKPSSSWGES) are enriched in low complexity.

It belongs to the cyclin family. Cyclin AB subfamily. As to quaternary structure, interacts with CDK2 kinase. Ubiquitinated. Ubiquitination leads to its degradation during anaphase entry, after degradation of CCNB1.

It is found in the nucleus. Its function is as follows. Cyclins are positive regulatory subunits of the cyclin-dependent kinases (CDKs), and thereby play an essential role in the control of the cell cycle, notably via their destruction during cell division. Its tissue specificity suggest that it may be required during early meiotic prophase I. This chain is G2/mitotic-specific cyclin-B3 (CCNB3), found in Canis lupus familiaris (Dog).